The sequence spans 106 residues: uncharacterized protein (106 aa).

2 consecutive transmembrane segments (helical) span residues 53–70 and 74–93; these read LLLLTAAILYIVMPLDII and ILGLGFIDDAAVLGLIWTLI.

Its subcellular location is the cell membrane. This is an uncharacterized protein from Bacillus subtilis (strain 168).